We begin with the raw amino-acid sequence, 330 residues long: Probable L-lactate dehydrogenase (330 aa).

Residues Arg105, Asn137, and Arg168 each contribute to the substrate site. Asn137 contributes to the NAD(+) binding site. Residue His192 is the Proton acceptor of the active site.

This sequence belongs to the LDH/MDH superfamily. LDH family. Homotetramer.

Its subcellular location is the cytoplasm. The catalysed reaction is (S)-lactate + NAD(+) = pyruvate + NADH + H(+). The protein operates within fermentation; pyruvate fermentation to lactate; (S)-lactate from pyruvate: step 1/1. The chain is Probable L-lactate dehydrogenase from Schizosaccharomyces pombe (strain 972 / ATCC 24843) (Fission yeast).